The sequence spans 30 residues: Dermaseptin-DI4 (30 aa).

In terms of tissue distribution, expressed by the skin glands.

It localises to the secreted. Antibacterial activity against Gram-positive bacteria S.aureus and E.faecalis, and Gram-negative bacteria P.aeruginosa and E.coli. This Phyllomedusa distincta (Monkey frog) protein is Dermaseptin-DI4.